Reading from the N-terminus, the 497-residue chain is Probable cytosol aminopeptidase (497 aa).

Residues Lys267 and Asp272 each contribute to the Mn(2+) site. Lys279 is an active-site residue. Positions 290, 349, and 351 each coordinate Mn(2+). Arg353 is an active-site residue.

Belongs to the peptidase M17 family. Requires Mn(2+) as cofactor.

It localises to the cytoplasm. It carries out the reaction Release of an N-terminal amino acid, Xaa-|-Yaa-, in which Xaa is preferably Leu, but may be other amino acids including Pro although not Arg or Lys, and Yaa may be Pro. Amino acid amides and methyl esters are also readily hydrolyzed, but rates on arylamides are exceedingly low.. It catalyses the reaction Release of an N-terminal amino acid, preferentially leucine, but not glutamic or aspartic acids.. Presumably involved in the processing and regular turnover of intracellular proteins. Catalyzes the removal of unsubstituted N-terminal amino acids from various peptides. The protein is Probable cytosol aminopeptidase of Pseudomonas putida (strain GB-1).